A 311-amino-acid polypeptide reads, in one-letter code: Cytochrome f (311 aa).

A signal peptide spans 1 to 27 (MRRHLSLVLGSLVIGLALLIAPGASWA). Tyr-28, Cys-48, Cys-51, and His-52 together coordinate heme. Residues 277–297 (IYGLLAFFAAVAIAQIMLVLK) traverse the membrane as a helical segment.

The protein belongs to the cytochrome f family. In terms of assembly, the 4 large subunits of the cytochrome b6-f complex are cytochrome b6, subunit IV (17 kDa polypeptide, PetD), cytochrome f and the Rieske protein, while the 4 small subunits are PetG, PetL, PetM and PetN. The complex functions as a dimer. Heme is required as a cofactor.

It is found in the cellular thylakoid membrane. Its function is as follows. Component of the cytochrome b6-f complex, which mediates electron transfer between photosystem II (PSII) and photosystem I (PSI), cyclic electron flow around PSI, and state transitions. In Synechococcus sp. (strain CC9902), this protein is Cytochrome f.